We begin with the raw amino-acid sequence, 446 residues long: Bifunctional protein GlmU (446 aa).

A pyrophosphorylase region spans residues Met1 to Arg225. Residues Leu6 to Gly9, Lys20, Gln70, and Gly75 to Thr76 contribute to the UDP-N-acetyl-alpha-D-glucosamine site. A Mg(2+)-binding site is contributed by Asp98. Residues Gly135, Glu150, Asn165, and Asn223 each coordinate UDP-N-acetyl-alpha-D-glucosamine. Asn223 contacts Mg(2+). Residues Val226–Glu246 are linker. Positions Gly247–Lys446 are N-acetyltransferase. Residues Arg328 and Lys346 each contribute to the UDP-N-acetyl-alpha-D-glucosamine site. His358 acts as the Proton acceptor in catalysis. UDP-N-acetyl-alpha-D-glucosamine-binding residues include Tyr361 and Asn372. Acetyl-CoA contacts are provided by residues Ala375, Asn381 to Tyr382, Ser400, Ala418, and Arg435.

It in the N-terminal section; belongs to the N-acetylglucosamine-1-phosphate uridyltransferase family. The protein in the C-terminal section; belongs to the transferase hexapeptide repeat family. As to quaternary structure, homotrimer. Mg(2+) serves as cofactor.

The protein localises to the cytoplasm. The catalysed reaction is alpha-D-glucosamine 1-phosphate + acetyl-CoA = N-acetyl-alpha-D-glucosamine 1-phosphate + CoA + H(+). It carries out the reaction N-acetyl-alpha-D-glucosamine 1-phosphate + UTP + H(+) = UDP-N-acetyl-alpha-D-glucosamine + diphosphate. The protein operates within nucleotide-sugar biosynthesis; UDP-N-acetyl-alpha-D-glucosamine biosynthesis; N-acetyl-alpha-D-glucosamine 1-phosphate from alpha-D-glucosamine 6-phosphate (route II): step 2/2. It functions in the pathway nucleotide-sugar biosynthesis; UDP-N-acetyl-alpha-D-glucosamine biosynthesis; UDP-N-acetyl-alpha-D-glucosamine from N-acetyl-alpha-D-glucosamine 1-phosphate: step 1/1. Its pathway is bacterial outer membrane biogenesis; LPS lipid A biosynthesis. In terms of biological role, catalyzes the last two sequential reactions in the de novo biosynthetic pathway for UDP-N-acetylglucosamine (UDP-GlcNAc). The C-terminal domain catalyzes the transfer of acetyl group from acetyl coenzyme A to glucosamine-1-phosphate (GlcN-1-P) to produce N-acetylglucosamine-1-phosphate (GlcNAc-1-P), which is converted into UDP-GlcNAc by the transfer of uridine 5-monophosphate (from uridine 5-triphosphate), a reaction catalyzed by the N-terminal domain. The chain is Bifunctional protein GlmU from Carboxydothermus hydrogenoformans (strain ATCC BAA-161 / DSM 6008 / Z-2901).